The sequence spans 71 residues: Sec-independent protein translocase protein TatA (71 aa).

Residues Met1–Gly21 form a helical membrane-spanning segment.

It belongs to the TatA/E family. In terms of assembly, the Tat system comprises two distinct complexes: a TatABC complex, containing multiple copies of TatA, TatB and TatC subunits, and a separate TatA complex, containing only TatA subunits. Substrates initially bind to the TatABC complex, which probably triggers association of the separate TatA complex to form the active translocon.

It localises to the cell inner membrane. In terms of biological role, part of the twin-arginine translocation (Tat) system that transports large folded proteins containing a characteristic twin-arginine motif in their signal peptide across membranes. TatA could form the protein-conducting channel of the Tat system. The protein is Sec-independent protein translocase protein TatA of Dichelobacter nodosus (strain VCS1703A).